The sequence spans 119 residues: Large ribosomal subunit protein uL18 (119 aa).

The protein belongs to the universal ribosomal protein uL18 family. Part of the 50S ribosomal subunit; part of the 5S rRNA/L5/L18/L25 subcomplex. Contacts the 5S and 23S rRNAs.

Functionally, this is one of the proteins that bind and probably mediate the attachment of the 5S RNA into the large ribosomal subunit, where it forms part of the central protuberance. The protein is Large ribosomal subunit protein uL18 of Desulfovibrio desulfuricans (strain ATCC 27774 / DSM 6949 / MB).